A 145-amino-acid chain; its full sequence is Transcription antitermination protein NusB (145 aa).

It belongs to the NusB family.

Functionally, involved in transcription antitermination. Required for transcription of ribosomal RNA (rRNA) genes. Binds specifically to the boxA antiterminator sequence of the ribosomal RNA (rrn) operons. In Burkholderia ambifaria (strain MC40-6), this protein is Transcription antitermination protein NusB.